The sequence spans 263 residues: Chymotrypsinogen B (263 aa).

The N-terminal stretch at 1-18 (MAFLWLVSCFALVGATFG) is a signal peptide. Cystine bridges form between Cys19/Cys140, Cys60/Cys76, Cys154/Cys219, Cys186/Cys200, and Cys209/Cys238. Positions 34–261 (IVNGEDAIPG…LMPWVQEILE (228 aa)) constitute a Peptidase S1 domain. The Charge relay system role is filled by His75. The residue at position 93 (Ser93) is a Phosphoserine. Asp120 acts as the Charge relay system in catalysis. Ser213 serves as the catalytic Charge relay system.

Belongs to the peptidase S1 family.

The protein resides in the secreted. The protein localises to the extracellular space. The enzyme catalyses Preferential cleavage: Tyr-|-Xaa, Trp-|-Xaa, Phe-|-Xaa, Leu-|-Xaa.. This Mus musculus (Mouse) protein is Chymotrypsinogen B (Ctrb1).